The primary structure comprises 374 residues: MARSLAWRCCPWCLSEDEKAAARVDQEITRLLLEHRRQVRGELKLLLLGTGESGKSTFIKQMRIIHGAGYSEEDRKGFRPLVFQNIFLSVQAIIEAMDRLQIPYSRPESKLHASLVMSQDPYKVNTFETRYALAVQSLWRDAGVRACYERRREFHLLDSAVYYLSHLERIAEEGYVPTAQDVLRSRMPTTGINEYCFSVQKTNLRIVDVGGQKSERRKWIHCFEDVTALIFLASLSEYDQCLEENGQENRMQESLALFGTVLALPWFRATSVILFLNKTDILEDKVRTSHLATYFPGFRGPPQDPEAAKRFILELYTRVYAGAAAGPDGASKGPRSRRLFSHYTCATDTQNIRKVFKDVRDSVLARYLDEINLL.

The 334-residue stretch at 41–374 folds into the G-alpha domain; it reads GELKLLLLGT…ARYLDEINLL (334 aa). The interval 44–57 is G1 motif; that stretch reads KLLLLGTGESGKST. GTP contacts are provided by residues 49–56, 183–189, 208–212, 277–280, and Ala-346; these read GTGESGKS, LRSRMPT, DVGGQ, and NKTD. The Mg(2+) site is built by Ser-56 and Thr-189. The tract at residues 181-189 is G2 motif; sequence DVLRSRMPT. The segment at 204–213 is G3 motif; the sequence is LRIVDVGGQK. The G4 motif stretch occupies residues 273 to 280; that stretch reads ILFLNKTD. Residues 344–349 are G5 motif; sequence TCATDT.

The protein belongs to the G-alpha family. G(q) subfamily. As to quaternary structure, g proteins are composed of 3 units; alpha, beta and gamma. The alpha chain contains the guanine nucleotide binding site.

Guanine nucleotide-binding proteins (G proteins) are involved as modulators or transducers in various transmembrane signaling systems. The chain is Guanine nucleotide-binding protein subunit alpha-15 (GNA15) from Oryctolagus cuniculus (Rabbit).